The chain runs to 735 residues: MIP-related peptides (735 aa).

Positions 1–20 (MCTRPGLAALLVLMTSCASS) are cleaved as a signal peptide. The propeptide occupies 21–135 (FSRADTQSAS…EDSDTKVDTR (115 aa)). Positions 33–65 (ALSAASADAQAARQQQEQHLVAQQQQQQQQQQQ) are enriched in low complexity. 2 disordered regions span residues 33–212 (ALSA…FGKK) and 229–251 (FGKKSSGESAGDSGYISVASRGS). Composition is skewed to polar residues over residues 66–76 (HSNNNEPQQRA) and 101–125 (PVSQPDLSPDFSNPMGSSLSQSGTP). A phenylalanine amide mark is found at Phe142, Phe153, and Phe164. Over residues 142 to 159 (FGKKRGQAPRFFGKKRAM) the composition is skewed to basic residues. The propeptide occupies 168-184 (SSEFPTSNSEQLALDTR). Phe190 is subject to Phenylalanine amide. The propeptide occupies 194–203 (SFPESNREQR). Basic and acidic residues predominate over residues 194–204 (SFPESNREQRG). Phenylalanine amide is present on residues Phe209 and Phe229. Residues 214-229 (FDENVDIDERAAPRFF) constitute a propeptide, linker peptide. A propeptide spanning residues 233–249 (SSGESAGDSGYISVASR) is cleaved from the precursor. Phenylalanine amide is present on Phe255. Positions 259-267 (QDDDIMIAA) are cleaved as a propeptide — linker peptide. Phe274 carries the phenylalanine amide modification. The propeptide at 279–287 (SDDNVALDL) is linker peptide. Residue Phe294 is modified to Phenylalanine amide. The propeptide occupies 298 to 311 (QSSDLDDEISVALR). Phe317 is modified (phenylalanine amide). A propeptide spanning residues 321-332 (RADDEDILLGER) is cleaved from the precursor. Residue Phe338 is modified to Phenylalanine amide. Positions 342-353 (RANDENISFSLR) are excised as a propeptide. Disordered regions lie at residues 352-373 (LRGSPRFFGKKRSDESDDDNIG) and 381-400 (RFFGKKRSDETDDENIGLMA). Phe359 carries the phenylalanine amide modification. Positions 363 to 377 (RSDESDDDNIGLVAR) are excised as a propeptide. Phenylalanine amide is present on Phe383. A propeptide spanning residues 387-401 (RSDETDDENIGLMAR) is cleaved from the precursor. Phe407 carries the phenylalanine amide modification. The propeptide at 412 to 426 (SDGLDDGGNIIDVAT) is linker peptide. The segment at 430-464 (PRFFGKKRSNSDSSDKSSDSALSSSESGRQTRQAP) is disordered. The residue at position 433 (Phe433) is a Phenylalanine amide. Positions 437–461 (RSNSDSSDKSSDSALSSSESGRQTR) are excised as a propeptide. Over residues 438–447 (SNSDSSDKSS) the composition is skewed to basic and acidic residues. Gln462 carries the pyrrolidone carboxylic acid modification. Phe467 is modified (phenylalanine amide). Positions 471–493 (YVDEHHVSKRAAATAFPLIIEAR) are excised as a propeptide. At Gln494 the chain carries Pyrrolidone carboxylic acid. Phe499 carries the phenylalanine amide modification. A propeptide spanning residues 503 to 509 (EYRYPPR) is cleaved from the precursor. Ile515 carries the post-translational modification Isoleucine amide. Positions 519 to 546 (FSLYRSPGKYSLSSPYMSAKEFKETFRR) are excised as a propeptide. Met552 carries the methionine amide modification. Residues 556 to 585 (TAELNEEGSDDFTNDDTDDENEYDETVLFK) constitute a propeptide that is removed on maturation. Residue Val592 is modified to Valine amide. Position 601 is a leucine amide (Leu601). Ile610 carries the post-translational modification Isoleucine amide. Val619 is subject to Valine amide. Ile628 bears the Isoleucine amide mark. Residues 632 to 661 (DLDWYQKALCAEADILELDDCADFLGNDDV) constitute a propeptide, linker peptide. At Gln664 the chain carries Pyrrolidone carboxylic acid. Ile669 carries the isoleucine amide modification. Positions 674-705 (GEDVSERDYAQLLEALSRLQAIKQIKARIQNE) are cleaved as a propeptide — linker peptide. Val714 carries the valine amide modification. Positions 715–735 (GRRSEYNLGPFDEFVDESMER) are excised as a propeptide.

In terms of tissue distribution, expressed in the CNS and peripheral tissues (the digestive tract, vasculature, and the reproductive organs).

The protein resides in the secreted. Has some structural and functional features similar to vertebrate opioid peptides. AMRPs are inhibitory on Aplysia esophagus, penis retractor muscle, and body wall muscle. This is MIP-related peptides (MRP) from Aplysia californica (California sea hare).